A 327-amino-acid chain; its full sequence is Ribosomal RNA large subunit methyltransferase F (327 aa).

This sequence belongs to the methyltransferase superfamily. METTL16/RlmF family.

The protein resides in the cytoplasm. It catalyses the reaction adenosine(1618) in 23S rRNA + S-adenosyl-L-methionine = N(6)-methyladenosine(1618) in 23S rRNA + S-adenosyl-L-homocysteine + H(+). Specifically methylates the adenine in position 1618 of 23S rRNA. The polypeptide is Ribosomal RNA large subunit methyltransferase F (Marinomonas sp. (strain MWYL1)).